Reading from the N-terminus, the 207-residue chain is Ribonuclease HII (207 aa).

The RNase H type-2 domain occupies 18–207; it reads TYLSGSDEAG…PIKKISKETS (190 aa). Positions 24, 25, and 116 each coordinate a divalent metal cation.

The protein belongs to the RNase HII family. The cofactor is Mn(2+). It depends on Mg(2+) as a cofactor.

The protein localises to the cytoplasm. The catalysed reaction is Endonucleolytic cleavage to 5'-phosphomonoester.. In terms of biological role, endonuclease that specifically degrades the RNA of RNA-DNA hybrids. This chain is Ribonuclease HII, found in Mycoplasma mycoides subsp. mycoides SC (strain CCUG 32753 / NCTC 10114 / PG1).